Consider the following 455-residue polypeptide: Kynurenine 3-monooxygenase (455 aa).

Belongs to the aromatic-ring hydroxylase family. KMO subfamily. Requires FAD as cofactor.

It catalyses the reaction L-kynurenine + NADPH + O2 + H(+) = 3-hydroxy-L-kynurenine + NADP(+) + H2O. Its pathway is cofactor biosynthesis; NAD(+) biosynthesis; quinolinate from L-kynurenine: step 1/3. Functionally, catalyzes the hydroxylation of L-kynurenine (L-Kyn) to form 3-hydroxy-L-kynurenine (L-3OHKyn). Required for synthesis of quinolinic acid. The chain is Kynurenine 3-monooxygenase from Xanthomonas oryzae pv. oryzae (strain MAFF 311018).